The primary structure comprises 141 residues: Nucleoside diphosphate kinase (141 aa).

Residues K9, F57, R85, T91, R102, and N112 each coordinate ATP. The active-site Pros-phosphohistidine intermediate is the H115.

Belongs to the NDK family. As to quaternary structure, homotetramer. It depends on Mg(2+) as a cofactor.

It is found in the cytoplasm. It catalyses the reaction a 2'-deoxyribonucleoside 5'-diphosphate + ATP = a 2'-deoxyribonucleoside 5'-triphosphate + ADP. The catalysed reaction is a ribonucleoside 5'-diphosphate + ATP = a ribonucleoside 5'-triphosphate + ADP. Functionally, major role in the synthesis of nucleoside triphosphates other than ATP. The ATP gamma phosphate is transferred to the NDP beta phosphate via a ping-pong mechanism, using a phosphorylated active-site intermediate. The chain is Nucleoside diphosphate kinase from Chlamydia trachomatis serovar A (strain ATCC VR-571B / DSM 19440 / HAR-13).